The following is a 721-amino-acid chain: MTDTPVEKLTEPEAVSELERLAREIAHHDELYHANDRPEISDAEYDALKRRNDAIEARFPHLVRTDSPSLRVGTAPVSKFAQVVHARPMLSLGNAFSDDDVRDFVGSVYRFLGPLPDNSIAFTAEPKIDGLSMSIRYENGILISGATRGDGTTGENVTTNIRTIAEIPNRLPAGAPSVVEVRGEVYMAKSDFLALNEQMAAEGKQTYVNPRNTAAGSLRQLDAKVTASRKLKFFAYAWGEMSDMPADTQMGMVEIFREWGFPVNPLTKRLHGADELLAHYRAIGLERAQLDYDIDGVVYKVDRLDLQTRLGFRSRSPRWAIAHKFPAEQATTILRGIDIQVGRTGALTPVARLEPITVGGVVVTNATLHNEDYIKGIGLKGERIRADEHDIRVGDTVIVQRAGDVIPQIVDVVLEKRKADATPFVFPHECPVCHSHAVREEGEAVYRCTGGLTCAAQAVERIRHFVSRNAFDIEGLGEKQVEFFFHAEDDKLKIKSPADIFTLQQRQAESPLKKLENIEGFGATSVKKLYDAINDRREIALHRFLFGLGIRHVGEVNAKRFARAYLSYAAFEEAALEAVPPKEGDRTDKGNEAWQELIAVEGIGSIVAEAVVDFYAEPHNREVLDNLFKAGVTPVDEVALVSTGSPVEGKTVVFTGSLERMSRDEAKAMAERYGAKTAGSVSKKTDLVVAGPGAGSKLAKASELGIEVIDEDAWFTLVGEE.

NAD(+) is bound by residues 42–46 (DAEYD), 91–92 (SL), and E125. The active-site N6-AMP-lysine intermediate is K127. R148, E184, K300, and K324 together coordinate NAD(+). Zn(2+)-binding residues include C430, C433, C448, and C454. Residues 642–721 (STGSPVEGKT…DAWFTLVGEE (80 aa)) enclose the BRCT domain.

This sequence belongs to the NAD-dependent DNA ligase family. LigA subfamily. The cofactor is Mg(2+). It depends on Mn(2+) as a cofactor.

It carries out the reaction NAD(+) + (deoxyribonucleotide)n-3'-hydroxyl + 5'-phospho-(deoxyribonucleotide)m = (deoxyribonucleotide)n+m + AMP + beta-nicotinamide D-nucleotide.. Its function is as follows. DNA ligase that catalyzes the formation of phosphodiester linkages between 5'-phosphoryl and 3'-hydroxyl groups in double-stranded DNA using NAD as a coenzyme and as the energy source for the reaction. It is essential for DNA replication and repair of damaged DNA. This is DNA ligase from Brucella anthropi (strain ATCC 49188 / DSM 6882 / CCUG 24695 / JCM 21032 / LMG 3331 / NBRC 15819 / NCTC 12168 / Alc 37) (Ochrobactrum anthropi).